The following is a 250-amino-acid chain: Triosephosphate isomerase (250 aa).

Substrate is bound at residue 9–11 (NWK). Residue His-96 is the Electrophile of the active site. Glu-168 acts as the Proton acceptor in catalysis. Substrate is bound by residues Gly-174, Ser-216, and 237–238 (GG).

Belongs to the triosephosphate isomerase family. In terms of assembly, homodimer.

It localises to the cytoplasm. The catalysed reaction is D-glyceraldehyde 3-phosphate = dihydroxyacetone phosphate. Its pathway is carbohydrate biosynthesis; gluconeogenesis. It functions in the pathway carbohydrate degradation; glycolysis; D-glyceraldehyde 3-phosphate from glycerone phosphate: step 1/1. Involved in the gluconeogenesis. Catalyzes stereospecifically the conversion of dihydroxyacetone phosphate (DHAP) to D-glyceraldehyde-3-phosphate (G3P). The sequence is that of Triosephosphate isomerase from Leptospira interrogans serogroup Icterohaemorrhagiae serovar copenhageni (strain Fiocruz L1-130).